Consider the following 871-residue polypeptide: DNA mismatch repair protein MutS (871 aa).

620–627 (GPNMGGKS) is an ATP binding site. The interval 806 to 837 (HHGGLNEPKQATMELTPPPEAIPSHTEKRNPL) is disordered.

Belongs to the DNA mismatch repair MutS family.

Functionally, this protein is involved in the repair of mismatches in DNA. It is possible that it carries out the mismatch recognition step. This protein has a weak ATPase activity. The polypeptide is DNA mismatch repair protein MutS (Idiomarina loihiensis (strain ATCC BAA-735 / DSM 15497 / L2-TR)).